The primary structure comprises 201 residues: Molybdenum cofactor guanylyltransferase (201 aa).

GTP-binding positions include 15-17 (LCG), lysine 28, aspartate 74, and aspartate 104. Aspartate 104 is a Mg(2+) binding site.

The protein belongs to the MobA family. As to quaternary structure, monomer. The cofactor is Mg(2+).

It localises to the cytoplasm. The catalysed reaction is Mo-molybdopterin + GTP + H(+) = Mo-molybdopterin guanine dinucleotide + diphosphate. Transfers a GMP moiety from GTP to Mo-molybdopterin (Mo-MPT) cofactor (Moco or molybdenum cofactor) to form Mo-molybdopterin guanine dinucleotide (Mo-MGD) cofactor. The chain is Molybdenum cofactor guanylyltransferase from Ectopseudomonas mendocina (strain ymp) (Pseudomonas mendocina).